Consider the following 506-residue polypeptide: Histidine ammonia-lyase (506 aa).

The 5-imidazolinone (Ala-Gly) cross-link spans 143–145 (ASG). Ser-144 carries the 2,3-didehydroalanine (Ser) modification.

Belongs to the PAL/histidase family. In terms of processing, contains an active site 4-methylidene-imidazol-5-one (MIO), which is formed autocatalytically by cyclization and dehydration of residues Ala-Ser-Gly.

It is found in the cytoplasm. The catalysed reaction is L-histidine = trans-urocanate + NH4(+). The protein operates within amino-acid degradation; L-histidine degradation into L-glutamate; N-formimidoyl-L-glutamate from L-histidine: step 1/3. The sequence is that of Histidine ammonia-lyase from Salmonella agona (strain SL483).